The sequence spans 54 residues: Large ribosomal subunit protein bL33 (54 aa).

This sequence belongs to the bacterial ribosomal protein bL33 family.

This is Large ribosomal subunit protein bL33 from Elusimicrobium minutum (strain Pei191).